The chain runs to 48 residues: Large ribosomal subunit protein bL32 (48 aa).

The segment covering 1–20 has biased composition (basic residues); the sequence is MAVPKRRVSKTRAAKRRTHY. Residues 1-48 form a disordered region; that stretch reads MAVPKRRVSKTRAAKRRTHYKVSLPMPIKDKDGSYKMPHRANPTTKEY.

Belongs to the bacterial ribosomal protein bL32 family.

In Campylobacter jejuni subsp. jejuni serotype O:2 (strain ATCC 700819 / NCTC 11168), this protein is Large ribosomal subunit protein bL32 (rpmF).